The primary structure comprises 175 residues: NADH-ubiquinone oxidoreductase chain 6 (175 aa).

The next 5 membrane-spanning stretches (helical) occupy residues 1-21 (MTMYIAFILSTIFVIGFVGFS), 25-45 (SPIYGGLGLIVSGGVGCGIVL), 47-67 (FGGSFLGLMVFLIYLGGMLVV), 88-108 (TVFGAFVSGLMMEFCMVYYAL), and 149-169 (YGTWLVIVTGWSLLIGVVVIM).

The protein belongs to the complex I subunit 6 family. As to quaternary structure, core subunit of respiratory chain NADH dehydrogenase (Complex I) which is composed of 45 different subunits.

It localises to the mitochondrion inner membrane. The enzyme catalyses a ubiquinone + NADH + 5 H(+)(in) = a ubiquinol + NAD(+) + 4 H(+)(out). In terms of biological role, core subunit of the mitochondrial membrane respiratory chain NADH dehydrogenase (Complex I) which catalyzes electron transfer from NADH through the respiratory chain, using ubiquinone as an electron acceptor. Essential for the catalytic activity and assembly of complex I. In Sus scrofa (Pig), this protein is NADH-ubiquinone oxidoreductase chain 6 (MT-ND6).